Reading from the N-terminus, the 1561-residue chain is Synemin (1561 aa).

The segment at 1–10 is head; sequence MLSWRLQTGS. The coil 1A stretch occupies residues 11-49; that stretch reads EKAELQELNARLYDYVCRVRELERENLLLEEELRSRLSR. The segment at 11–320 is interaction with DMD and UTRN; the sequence is EKAELQELNA…YRALLEGESN (310 aa). Residues 11 to 322 form the IF rod domain; it reads EKAELQELNA…ALLEGESNPE (312 aa). Positions 50–58 are linker 1; it reads EDRWAEDQA. The tract at residues 59–163 is coil 1B; sequence LYAEEARSLR…DLRARAASLT (105 aa). Residues 164-186 are linker 12; that stretch reads MHFRARATSPAAPPPRLRDVHDS. Residues 187–300 are coil 2; it reads YALLVAESWR…LRDYQELLQV (114 aa). Positions 301 to 1561 are tail; the sequence is KTGLSLEVAT…EEEEEGEGWF (1261 aa). 2 stretches are compositionally biased toward polar residues: residues 371 to 390 and 401 to 421; these read SSAS…TTAV and SRHS…KTIS. 3 disordered regions span residues 371–421, 549–574, and 591–637; these read SSAS…KTIS, DARK…RSVK, and EVST…DSTT. A compositionally biased stretch (basic and acidic residues) spans 601–624; sequence GRKDVSHSGGREAETKETRFRLDT. Residues 625–637 show a composition bias toward polar residues; sequence QDTASSLQSDSTT. A Phosphothreonine modification is found at Thr-653. Residues Ser-655, Ser-778, Ser-780, Ser-1044, Ser-1049, Ser-1077, Ser-1087, Ser-1179, and Ser-1182 each carry the phosphoserine modification. Disordered stretches follow at residues 1033–1061 and 1075–1099; these read SVVR…VPAG and SPSG…QGPV. Residues 1086 to 1099 are compositionally biased toward polar residues; sequence VSPSSDQRVTQGPV. An interaction with TLN1 and VCL region spans residues 1152-1453; it reads VSGDFSEAVS…GPKETSFTFQ (302 aa). A disordered region spans residues 1212–1231; it reads ADISGSGRMPGSERSHTEKE. A compositionally biased stretch (basic and acidic residues) spans 1222–1231; that stretch reads GSERSHTEKE. The segment at 1242 to 1557 is interaction with DMD and UTRN; the sequence is AQVGGNFATE…DNEEEEEEEG (316 aa). Ser-1425 is modified (phosphoserine). Arg-1481 is subject to Omega-N-methylarginine. Positions 1491 to 1519 are disordered; the sequence is DERVASTGSGASPGDAHQAPGEKGTEQAG.

This sequence belongs to the intermediate filament family. In terms of assembly, interacts with DES, DMD, DTNA, TLN1, UTRN and VCL. Isoform 1 and isoform 2 interact with GFAP and VIM. Isoform 2 and isoform 3 are detected in adult skeletal muscle, heart and bladder, whereas isoform 1 is only detected in adult bladder (at protein level).

The protein resides in the cytoplasm. It is found in the cytoskeleton. The protein localises to the cell junction. It localises to the adherens junction. Its function is as follows. Type-VI intermediate filament (IF) which plays an important cytoskeletal role within the muscle cell cytoskeleton. It forms heteromeric IFs with desmin and/or vimentin, and via its interaction with cytoskeletal proteins alpha-dystrobrevin, dystrophin, talin-1, utrophin and vinculin, is able to link these heteromeric IFs to adherens-type junctions, such as to the costameres, neuromuscular junctions, and myotendinous junctions within striated muscle cells. This is Synemin from Mus musculus (Mouse).